We begin with the raw amino-acid sequence, 159 residues long: SsrA-binding protein (159 aa).

Residues Lys138–Arg153 show a composition bias toward basic and acidic residues. The segment at Lys138–Ala159 is disordered.

The protein belongs to the SmpB family.

Its subcellular location is the cytoplasm. Required for rescue of stalled ribosomes mediated by trans-translation. Binds to transfer-messenger RNA (tmRNA), required for stable association of tmRNA with ribosomes. tmRNA and SmpB together mimic tRNA shape, replacing the anticodon stem-loop with SmpB. tmRNA is encoded by the ssrA gene; the 2 termini fold to resemble tRNA(Ala) and it encodes a 'tag peptide', a short internal open reading frame. During trans-translation Ala-aminoacylated tmRNA acts like a tRNA, entering the A-site of stalled ribosomes, displacing the stalled mRNA. The ribosome then switches to translate the ORF on the tmRNA; the nascent peptide is terminated with the 'tag peptide' encoded by the tmRNA and targeted for degradation. The ribosome is freed to recommence translation, which seems to be the essential function of trans-translation. The chain is SsrA-binding protein from Pseudoalteromonas translucida (strain TAC 125).